Reading from the N-terminus, the 105-residue chain is Thioredoxin (105 aa).

The Thioredoxin domain maps to 1-105; that stretch reads ATMTLTDANF…LEAQLADVLQ (105 aa). A disulfide bond links C29 and C32.

Functionally, participates in various redox reactions through the reversible oxidation of its active center dithiol to a disulfide and catalyzes dithiol-disulfide exchange reactions. This is Thioredoxin (trxA) from Alicyclobacillus acidocaldarius subsp. acidocaldarius (Bacillus acidocaldarius).